The chain runs to 292 residues: Acetylglutamate kinase (292 aa).

Substrate-binding positions include 64–65 (GG), arginine 86, and asparagine 190.

It belongs to the acetylglutamate kinase family. ArgB subfamily.

It localises to the cytoplasm. It catalyses the reaction N-acetyl-L-glutamate + ATP = N-acetyl-L-glutamyl 5-phosphate + ADP. It participates in amino-acid biosynthesis; L-arginine biosynthesis; N(2)-acetyl-L-ornithine from L-glutamate: step 2/4. Catalyzes the ATP-dependent phosphorylation of N-acetyl-L-glutamate. In Geobacter metallireducens (strain ATCC 53774 / DSM 7210 / GS-15), this protein is Acetylglutamate kinase.